A 318-amino-acid polypeptide reads, in one-letter code: Aspartate carbamoyltransferase catalytic subunit (318 aa).

2 residues coordinate carbamoyl phosphate: R64 and T65. Residue K92 participates in L-aspartate binding. Carbamoyl phosphate is bound by residues R114, H142, and Q145. L-aspartate-binding residues include R175 and R229. G270 and P271 together coordinate carbamoyl phosphate.

The protein belongs to the aspartate/ornithine carbamoyltransferase superfamily. ATCase family. In terms of assembly, heterododecamer (2C3:3R2) of six catalytic PyrB chains organized as two trimers (C3), and six regulatory PyrI chains organized as three dimers (R2).

The catalysed reaction is carbamoyl phosphate + L-aspartate = N-carbamoyl-L-aspartate + phosphate + H(+). It functions in the pathway pyrimidine metabolism; UMP biosynthesis via de novo pathway; (S)-dihydroorotate from bicarbonate: step 2/3. Catalyzes the condensation of carbamoyl phosphate and aspartate to form carbamoyl aspartate and inorganic phosphate, the committed step in the de novo pyrimidine nucleotide biosynthesis pathway. The polypeptide is Aspartate carbamoyltransferase catalytic subunit (Rhodospirillum centenum (strain ATCC 51521 / SW)).